The primary structure comprises 582 residues: Aspartate--tRNA(Asp/Asn) ligase (582 aa).

Glu-177 is a binding site for L-aspartate. The interval Gln-201–Lys-204 is aspartate. Arg-223 is an L-aspartate binding site. Residues Arg-223 to Glu-225 and Gln-232 each bind ATP. His-447 contributes to the L-aspartate binding site. Glu-481 serves as a coordination point for ATP. Arg-488 serves as a coordination point for L-aspartate. Residue Gly-533–Arg-536 participates in ATP binding.

It belongs to the class-II aminoacyl-tRNA synthetase family. Type 1 subfamily. Homodimer.

The protein resides in the cytoplasm. The catalysed reaction is tRNA(Asx) + L-aspartate + ATP = L-aspartyl-tRNA(Asx) + AMP + diphosphate. Aspartyl-tRNA synthetase with relaxed tRNA specificity since it is able to aspartylate not only its cognate tRNA(Asp) but also tRNA(Asn). Reaction proceeds in two steps: L-aspartate is first activated by ATP to form Asp-AMP and then transferred to the acceptor end of tRNA(Asp/Asn). The sequence is that of Aspartate--tRNA(Asp/Asn) ligase from Chlamydia trachomatis serovar A (strain ATCC VR-571B / DSM 19440 / HAR-13).